Consider the following 268-residue polypeptide: Zinc transporter ZupT (268 aa).

Transmembrane regions (helical) follow at residues 6–26, 37–57, 70–90, 125–145, and 152–172; these read LAFL…LIAF, SFAL…DIFF, TQGY…IGFI, GLFT…ATFV, and SIGL…GIAV. 2 residues coordinate Fe(2+): N136 and E139. Residues E139 and H164 each contribute to the Zn(2+) site. N165, E168, and E197 together coordinate Fe(2+). E168 contributes to the Zn(2+) binding site. The next 2 helical transmembrane spans lie at 201 to 221 and 248 to 268; these read AIVA…GIIF and MSMY…LLLA.

Belongs to the ZIP transporter (TC 2.A.5) family. ZupT subfamily.

The protein localises to the cell membrane. The enzyme catalyses Zn(2+)(in) = Zn(2+)(out). Mediates zinc uptake. May also transport other divalent cations. This Oceanobacillus iheyensis (strain DSM 14371 / CIP 107618 / JCM 11309 / KCTC 3954 / HTE831) protein is Zinc transporter ZupT.